The chain runs to 185 residues: GTP cyclohydrolase 1 (185 aa).

Zn(2+) contacts are provided by Cys76, His79, and Cys147.

The protein belongs to the GTP cyclohydrolase I family. As to quaternary structure, toroid-shaped homodecamer, composed of two pentamers of five dimers.

The enzyme catalyses GTP + H2O = 7,8-dihydroneopterin 3'-triphosphate + formate + H(+). It functions in the pathway cofactor biosynthesis; 7,8-dihydroneopterin triphosphate biosynthesis; 7,8-dihydroneopterin triphosphate from GTP: step 1/1. The chain is GTP cyclohydrolase 1 from Clostridium perfringens (strain ATCC 13124 / DSM 756 / JCM 1290 / NCIMB 6125 / NCTC 8237 / Type A).